A 459-amino-acid chain; its full sequence is UNC93-like protein 1 (459 aa).

Residues 1-26 (MNVRDEGKTTAEKHGGGEENKSPENK) form a disordered region. Helical transmembrane passes span 38–58 (LMGF…GMGG), 73–93 (AVYT…NVLG), 96–116 (LTLA…LYYN), 122–142 (AFAI…WAGE), 159–179 (IALF…IPFI), 195–215 (YIAF…ILPA), 251–271 (LLIV…FNNV), 287–307 (FYWG…DFSF), 314–334 (GFTG…GGLA), 355–375 (GIEF…DAMY), and 425–445 (LIVN…LVYF).

Belongs to the unc-93 family.

It is found in the membrane. In Arabidopsis thaliana (Mouse-ear cress), this protein is UNC93-like protein 1.